Consider the following 283-residue polypeptide: Urease accessory protein UreD (283 aa).

Residues 1 to 20 (MTQTQPVGTLRLTIDDQGPQ) are disordered.

Belongs to the UreD family. UreD, UreF and UreG form a complex that acts as a GTP-hydrolysis-dependent molecular chaperone, activating the urease apoprotein by helping to assemble the nickel containing metallocenter of UreC. The UreE protein probably delivers the nickel.

The protein resides in the cytoplasm. Required for maturation of urease via the functional incorporation of the urease nickel metallocenter. The chain is Urease accessory protein UreD from Corynebacterium glutamicum (strain R).